The primary structure comprises 654 residues: tRNA 5-methylaminomethyl-2-thiouridine biosynthesis bifunctional protein MnmC (654 aa).

The tRNA (mnm(5)s(2)U34)-methyltransferase stretch occupies residues 1-235 (MSDFQHAQLD…KREMLSGTYQ (235 aa)). Positions 261-654 (VGGGLAGCAS…LRDLVRGQRG (394 aa)) are FAD-dependent cmnm(5)s(2)U34 oxidoreductase.

It in the N-terminal section; belongs to the methyltransferase superfamily. tRNA (mnm(5)s(2)U34)-methyltransferase family. The protein in the C-terminal section; belongs to the DAO family. It depends on FAD as a cofactor.

Its subcellular location is the cytoplasm. It carries out the reaction 5-aminomethyl-2-thiouridine(34) in tRNA + S-adenosyl-L-methionine = 5-methylaminomethyl-2-thiouridine(34) in tRNA + S-adenosyl-L-homocysteine + H(+). In terms of biological role, catalyzes the last two steps in the biosynthesis of 5-methylaminomethyl-2-thiouridine (mnm(5)s(2)U) at the wobble position (U34) in tRNA. Catalyzes the FAD-dependent demodification of cmnm(5)s(2)U34 to nm(5)s(2)U34, followed by the transfer of a methyl group from S-adenosyl-L-methionine to nm(5)s(2)U34, to form mnm(5)s(2)U34. This chain is tRNA 5-methylaminomethyl-2-thiouridine biosynthesis bifunctional protein MnmC, found in Pseudomonas aeruginosa (strain ATCC 15692 / DSM 22644 / CIP 104116 / JCM 14847 / LMG 12228 / 1C / PRS 101 / PAO1).